Reading from the N-terminus, the 83-residue chain is Large ribosomal subunit protein bL31B (83 aa).

This sequence belongs to the bacterial ribosomal protein bL31 family. Type B subfamily. Part of the 50S ribosomal subunit.

The polypeptide is Large ribosomal subunit protein bL31B (Lactobacillus gasseri (strain ATCC 33323 / DSM 20243 / BCRC 14619 / CIP 102991 / JCM 1131 / KCTC 3163 / NCIMB 11718 / NCTC 13722 / AM63)).